A 1033-amino-acid chain; its full sequence is Putative U-box domain-containing protein 42 (1033 aa).

Residues 145-226 are disordered; sequence SQSQMTDIPD…SSNASSQRKY (82 aa). A compositionally biased stretch (polar residues) spans 200–226; sequence LSKSQSQSTEIPDIPSQSSNASSQRKY. The U-box domain occupies 245-322; that stretch reads PPYQAFICPL…QEWKVRNEAA (78 aa). ARM repeat units lie at residues 483–522, 523–562, 564–608, 610–659, and 665–704; these read PENIKQMAESGLLEPLLGHLAEGSEETQVAMAAYLVEIDI, GHEKKTYVAEKACPALIGLVQSENIDARRAAFKALAHISL, HPNN…NILE, GLEH…SLSK, and ATIVSVIKETDASFAMIELINNPHDELGVGALKLLIALTP.

It carries out the reaction S-ubiquitinyl-[E2 ubiquitin-conjugating enzyme]-L-cysteine + [acceptor protein]-L-lysine = [E2 ubiquitin-conjugating enzyme]-L-cysteine + N(6)-ubiquitinyl-[acceptor protein]-L-lysine.. It participates in protein modification; protein ubiquitination. Functions as an E3 ubiquitin ligase. This Arabidopsis thaliana (Mouse-ear cress) protein is Putative U-box domain-containing protein 42 (PUB42).